Consider the following 377-residue polypeptide: Guanine nucleotide-binding protein subunit beta-2 (377 aa).

WD repeat units lie at residues 63 to 93 (GHTG…IVWN), 105 to 135 (LPCA…SIFN), 154 to 185 (GHKG…VLWD), 202 to 233 (GHTA…RLWD), 246 to 276 (GHEG…RLFD), 293 to 323 (GDIP…YVWD), and 339 to 369 (SHEG…KIWA).

Belongs to the WD repeat G protein beta family. G proteins are composed of 3 units, alpha, beta and gamma.

In terms of biological role, guanine nucleotide-binding proteins (G proteins) are involved as a modulator or transducer in various transmembrane signaling systems. The beta and gamma chains are required for the GTPase activity, for replacement of GDP by GTP, and for G protein-effector interaction. This chain is Guanine nucleotide-binding protein subunit beta-2, found in Nicotiana tabacum (Common tobacco).